The primary structure comprises 901 residues: Protein translocase subunit SecA (901 aa).

Residues glutamine 87, 105–109, and aspartate 512 each bind ATP; that span reads GEGKT. A disordered region spans residues 853-901; sequence QMQQLSHQTDENEAAEAIAAQTGDRKVGRNDPCPCGSGKKYKSCHGRLS. Residues cysteine 885, cysteine 887, cysteine 896, and histidine 897 each contribute to the Zn(2+) site. A compositionally biased stretch (basic residues) spans 891–901; it reads KKYKSCHGRLS.

The protein belongs to the SecA family. As to quaternary structure, monomer and homodimer. Part of the essential Sec protein translocation apparatus which comprises SecA, SecYEG and auxiliary proteins SecDF-YajC and YidC. Requires Zn(2+) as cofactor.

It is found in the cell inner membrane. It localises to the cytoplasm. The enzyme catalyses ATP + H2O + cellular proteinSide 1 = ADP + phosphate + cellular proteinSide 2.. In terms of biological role, part of the Sec protein translocase complex. Interacts with the SecYEG preprotein conducting channel. Has a central role in coupling the hydrolysis of ATP to the transfer of proteins into and across the cell membrane, serving both as a receptor for the preprotein-SecB complex and as an ATP-driven molecular motor driving the stepwise translocation of polypeptide chains across the membrane. This is Protein translocase subunit SecA from Enterobacter sp. (strain 638).